We begin with the raw amino-acid sequence, 624 residues long: Pentatricopeptide repeat-containing protein At4g31070, mitochondrial (624 aa).

The transit peptide at 1 to 15 (MRWVKLGRRVIMSRA) directs the protein to the mitochondrion. PPR repeat units follow at residues 56 to 91 (FTAILPSVIKACAFQQEPFLLGAQLHCLCLKAGADC), 92 to 122 (DTVVSNSLISMYAKFSRKYAVRKVFDEMLHR), 123 to 157 (DTVSYCSIINSCCQDGLLYEAMKLIKEMYFYGFIP), 158 to 192 (KSELVASLLALCTRMGSSSKVARMFHALVLVDERM), 195 to 225 (SVLLSTALVDMYLKFDDHAAAFHVFDQMEVK), 226 to 260 (NEVSWTAMISGCVANQNYEMGVDLFRAMQRENLRP), 261 to 296 (NRVTLLSVLPACVELNYGSSLVKEIHGFSFRHGCHA), 297 to 327 (DERLTAAFMTMYCRCGNVSLSRVLFETSKVR), 328 to 362 (DVVMWSSMISGYAETGDCSEVMNLLNQMRKEGIEA), 363 to 397 (NSVTLLAIVSACTNSTLLSFASTVHSQILKCGFMS), 398 to 428 (HILLGNALIDMYAKCGSLSAAREVFYELTEK), 429 to 463 (DLVSWSSMINAYGLHGHGSEALEIFKGMIKGGHEV), 464 to 498 (DDMAFLAILSACNHAGLVEEAQTIFTQAGKYHMPV), and 499 to 529 (TLEHYACYINLLGRFGKIDDAFEVTINMPMK). Positions 534 to 610 (IWSSLLSACE…CYGFSKIEPE (77 aa)) are type E motif.

This sequence belongs to the PPR family. PCMP-E subfamily.

It localises to the mitochondrion. The sequence is that of Pentatricopeptide repeat-containing protein At4g31070, mitochondrial (PCMP-E7) from Arabidopsis thaliana (Mouse-ear cress).